Here is a 361-residue protein sequence, read N- to C-terminus: 5-formaminoimidazole-4-carboxamide-1-(beta)-D-ribofuranosyl 5'-monophosphate synthetase (361 aa).

5-amino-1-(5-phospho-beta-D-ribosyl)imidazole-4-carboxamide contacts are provided by His-27 and Ser-94. In terms of domain architecture, ATP-grasp spans 116–348 (RAILRWEAER…MGQRIAREIK (233 aa)). Residues 146–208 (PDDI…ANYC) and Glu-230 each bind ATP. Asn-258 provides a ligand contact to 5-amino-1-(5-phospho-beta-D-ribosyl)imidazole-4-carboxamide. Mg(2+) contacts are provided by Gln-297 and Glu-310.

This sequence belongs to the phosphohexose mutase family. Requires Mg(2+) as cofactor. It depends on Mn(2+) as a cofactor.

It carries out the reaction 5-amino-1-(5-phospho-beta-D-ribosyl)imidazole-4-carboxamide + formate + ATP = 5-formamido-1-(5-phospho-D-ribosyl)imidazole-4-carboxamide + ADP + phosphate. It participates in purine metabolism; IMP biosynthesis via de novo pathway; 5-formamido-1-(5-phospho-D-ribosyl)imidazole-4-carboxamide from 5-amino-1-(5-phospho-D-ribosyl)imidazole-4-carboxamide (formate route): step 1/1. Its function is as follows. Catalyzes the ATP- and formate-dependent formylation of 5-aminoimidazole-4-carboxamide-1-beta-d-ribofuranosyl 5'-monophosphate (AICAR) to 5-formaminoimidazole-4-carboxamide-1-beta-d-ribofuranosyl 5'-monophosphate (FAICAR) in the absence of folates. This Methanococcus maripaludis (strain C7 / ATCC BAA-1331) protein is 5-formaminoimidazole-4-carboxamide-1-(beta)-D-ribofuranosyl 5'-monophosphate synthetase.